We begin with the raw amino-acid sequence, 438 residues long: 23S rRNA (uracil(1939)-C(5))-methyltransferase RlmD (438 aa).

The TRAM domain occupies 11–69; the sequence is LQPESKHQQVLVEKLDHQGAGIAYLNKKPLFIDGTLPGEEVVTQLTESKSKFARGKLIK. [4Fe-4S] cluster is bound by residues C82, C88, C91, and C169. Residues Q272, F301, N306, E322, N349, and D370 each coordinate S-adenosyl-L-methionine. C396 serves as the catalytic Nucleophile.

The protein belongs to the class I-like SAM-binding methyltransferase superfamily. RNA M5U methyltransferase family. RlmD subfamily.

It catalyses the reaction uridine(1939) in 23S rRNA + S-adenosyl-L-methionine = 5-methyluridine(1939) in 23S rRNA + S-adenosyl-L-homocysteine + H(+). Catalyzes the formation of 5-methyl-uridine at position 1939 (m5U1939) in 23S rRNA. The chain is 23S rRNA (uracil(1939)-C(5))-methyltransferase RlmD from Vibrio vulnificus (strain CMCP6).